Here is a 612-residue protein sequence, read N- to C-terminus: UvrABC system protein C (612 aa).

Residues 20 to 98 (THSGVYRMLD…IKQHRPKYNI (79 aa)) enclose the GIY-YIG domain. One can recognise a UVR domain in the interval 208–243 (SSVLEEISAKMYQASEDMEYEKAQVYRDQLVVLRKL).

It belongs to the UvrC family. In terms of assembly, interacts with UvrB in an incision complex.

The protein resides in the cytoplasm. Its function is as follows. The UvrABC repair system catalyzes the recognition and processing of DNA lesions. UvrC both incises the 5' and 3' sides of the lesion. The N-terminal half is responsible for the 3' incision and the C-terminal half is responsible for the 5' incision. In Francisella tularensis subsp. tularensis (strain FSC 198), this protein is UvrABC system protein C.